A 214-amino-acid polypeptide reads, in one-letter code: Large ribosomal subunit protein uL3 (214 aa).

A disordered region spans residues 119–159; sequence GVKRHGFAGGPKTHGQSDRHRAPGSIGPTTDPGRVHKGKRM.

Belongs to the universal ribosomal protein uL3 family. In terms of assembly, part of the 50S ribosomal subunit. Forms a cluster with proteins L14 and L19.

Functionally, one of the primary rRNA binding proteins, it binds directly near the 3'-end of the 23S rRNA, where it nucleates assembly of the 50S subunit. The sequence is that of Large ribosomal subunit protein uL3 from Thermomicrobium roseum (strain ATCC 27502 / DSM 5159 / P-2).